The sequence spans 451 residues: Cysteine desulfurase (451 aa).

Ala121, Thr122, Gln229, Ser249, and His251 together coordinate pyridoxal 5'-phosphate. At Lys252 the chain carries N6-(pyridoxal phosphate)lysine. Thr289 contacts pyridoxal 5'-phosphate. Residue Cys375 is the Cysteine persulfide intermediate of the active site. Cys375 lines the [2Fe-2S] cluster pocket. Cys375 is a Zn(2+) binding site. Cys375 bears the Cysteine persulfide mark.

Belongs to the class-V pyridoxal-phosphate-dependent aminotransferase family. NifS/IscS subfamily. In terms of assembly, homodimer. Component of the mitochondrial core iron-sulfur cluster (ISC) complex composed of NFS1, LYRM4, NDUFAB1, ISCU, FXN, and FDX2; this complex is a heterohexamer containing two copies of each monomer. Component of cyteine desulfurase complex composed of NFS1, LYRM4 and NDUFAB1; this complex contributes to the activation of cysteine desulfurase activity and NFS1 stabilization. Interacts (homodimer form) with ISCU (D-state); each monomer interacts with the C-terminal regions of each NFS1 monomer. Interacts with HSPA9. Interacts (via homodimer form) with FDX2. Interacts (via homodimer form) with FXN. Interacts with LYRM4. Component of a complex composed of FXN, NFS1, LYRM4 and ISCU. Monomer. Homodimer. Oligomer. Interacts with ISCU. Component of the cysteine desulfurase complex composed of NFS1 and LYRM4; this complex contributes to the activation of cysteine desulfurase activity. Interacts with MOCS3. It depends on pyridoxal 5'-phosphate as a cofactor. In terms of processing, N-gluconoylated. Cysteine persulfide intermediate is reduced by thiol-containing molecules like glutathione and L-cysteine. Persulfide reduction is a rate-limiting step of cysteine desulfurase catalytic cycle.

It localises to the mitochondrion. The protein localises to the cytoplasm. Its subcellular location is the nucleus. It is found in the cytoskeleton. The protein resides in the microtubule organizing center. It localises to the centrosome. The catalysed reaction is (sulfur carrier)-H + L-cysteine = (sulfur carrier)-SH + L-alanine. It catalyses the reaction L-cysteinyl-[cysteine desulfurase] + L-cysteine = S-sulfanyl-L-cysteinyl-[cysteine desulfurase] + L-alanine. Active only in complex with LYRM4. In terms of biological role, cysteine desulfurase, of the core iron-sulfur cluster (ISC) assembly complex, that catalyzes the desulfuration of L-cysteine to L-alanine, as component of the cysteine desulfurase complex leading to the formation of a cysteine persulfide intermediate at the active site cysteine residue and participates in the [2Fe-2S] clusters assembly on the scaffolding protein ISCU. The persulfide is then transferred on the flexible Cys loop from the catalytic site of NFS1 to the surface of NFS1. After the NFS1-linked persulfide sulfur is transferred to one of the conserved Cys residues of the scaffold, a reaction assisted by FXN. The core iron-sulfur cluster (ISC) assembly complex is involved in the de novo synthesis of a [2Fe-2S] cluster, the first step of the mitochondrial iron-sulfur protein biogenesis. This process is initiated by the cysteine desulfurase complex (NFS1:LYRM4:NDUFAB1) that produces persulfide which is delivered on the scaffold protein ISCU in a FXN-dependent manner. Then this complex is stabilized by FDX2 which provides reducing equivalents to accomplish the [2Fe-2S] cluster assembly. Finally, the [2Fe-2S] cluster is transferred from ISCU to chaperone proteins, including HSCB, HSPA9 and GLRX5. May catalyze the desulfuration of L-cysteine to L-alanine as component of the cysteine desulfurase complex (NFS1:LYRM4), leading to the formation of a cysteine persulfide intermediate. Acts as a sulfur donor for MOCS3 by transferring the sulfur of the cysteine persulfide intermediate on MOCS3. In Rattus norvegicus (Rat), this protein is Cysteine desulfurase.